The chain runs to 164 residues: MMKTSAIHSPFEAPNTISLVAGTGDSNNPLNAFDMSLLKSGIGNLNLIRISSIMPPKADIIPLPKIPQGSLVPTAYGYQISEIKGETVAAGISVAIPKDKELCGLIMEYECVGGKKECEDTVRNMAKEGFEMRGWEIDEIISIASEHTVENIGCAFAAAALWYK.

Position 52 is a pyruvic acid (Ser) (Ser52).

The protein belongs to the PdaD family. It depends on pyruvate as a cofactor.

It catalyses the reaction L-arginine + H(+) = agmatine + CO2. This chain is Pyruvoyl-dependent arginine decarboxylase, found in Methanococcus maripaludis (strain C5 / ATCC BAA-1333).